The following is a 901-amino-acid chain: PGC-1 and ERR-induced regulator in muscle protein 1 (901 aa).

Disordered regions lie at residues 29–511, 564–671, and 731–752; these read QAGL…MPAS, SLEG…MGPG, and RHQE…APPP. The segment covering 100–112 has biased composition (polar residues); the sequence is GQQTPSTSAQSEA. A compositionally biased stretch (low complexity) spans 157-178; it reads GEPAGSPESPVHSAAPQRSPGS. Composition is skewed to polar residues over residues 267–276, 347–379, 387–418, 426–457, and 465–484; these read LSTSVSTTEQ, DESQ…QSTP, EPQS…QSTP, and EPQS…STPT. Positions 608–624 are enriched in low complexity; that stretch reads PSSEEPGSGEVSGPLSP.

Its subcellular location is the cytoplasm. It is found in the nucleus. In terms of biological role, regulates the expression of selective PPARGC1A/B and ESRRA/B/G target genes with roles in glucose and lipid metabolism, energy transfer, contractile function, muscle mitochondrial biogenesis and oxidative capacity. Required for the efficient induction of MT-CO2, MT-CO3, COX4I1, TFB1M, TFB2M, POLRMT and SIRT3 by PPARGC1A. Positively regulates the PPARGC1A/ESRRG-induced expression of CKMT2, TNNI3 and SLC2A4 and negatively regulates the PPARGC1A/ESRRG-induced expression of PDK4. This Bos taurus (Bovine) protein is PGC-1 and ERR-induced regulator in muscle protein 1 (PERM1).